Consider the following 531-residue polypeptide: MRLIFVLLATFVNAAFSYKILVFSPATSKSHLISNGRLADELARAGHDVTVLELDFLGISQTTNSVKVAKKRIIDGFQESTNFKNVLHGFSETVMEEPSFTDEIKGWWAYQNVYNDLCAEFLKMDDIFNELKNAKFDGFFAEQINLCGFGYAHALEIPRHFLISSCPFAAPVYDFTGLPMPTSTVAFAADLSISPTYTERARNLFVAVLTKLEFTLLNNRLQAHFQHKFGEHFPSLYSVTSDVDVIFVATDEIIDISTTTLQNIVHVGGLGVDDDVAEMDNVFASEMSKGKEGVIYFSLGTIANTTKIDSKVMRTVLDIVKKFPDYHFVIRADKYDLSTREYAKSVSNAFVSDWLPQPAILHHPRLKLFITHSGYNSIVEAARAGVPLINIPFMFDQNLNSRAVEKKGWGIRRHKKQLLTEPEEIEKAISEIIHNKKYSLKAQRIRDLIKSKPLSSSQLLIKTTEWAIKNHGLDEIKFESRGQTTWTYYNLDVIIPVFWLSISLVIPTIFGWYKFSCFGHVEEKKGKSKRD.

A signal peptide spans 1–17 (MRLIFVLLATFVNAAFS). Residue asparagine 304 is glycosylated (N-linked (GlcNAc...) asparagine). Residues 493–513 (VIIPVFWLSISLVIPTIFGWY) form a helical membrane-spanning segment.

It belongs to the UDP-glycosyltransferase family.

It is found in the membrane. It catalyses the reaction glucuronate acceptor + UDP-alpha-D-glucuronate = acceptor beta-D-glucuronoside + UDP + H(+). In Caenorhabditis elegans, this protein is Putative UDP-glucuronosyltransferase ugt-46 (ugt-46).